A 239-amino-acid chain; its full sequence is DNA repair protein RecO (239 aa).

It belongs to the RecO family.

In terms of biological role, involved in DNA repair and RecF pathway recombination. The sequence is that of DNA repair protein RecO from Stenotrophomonas maltophilia (strain R551-3).